The sequence spans 685 residues: tRNA 5-methylaminomethyl-2-thiouridine biosynthesis bifunctional protein MnmC (685 aa).

Residues methionine 1 to glutamine 272 form a tRNA (mnm(5)s(2)U34)-methyltransferase region. Residues isoleucine 278–leucine 685 are FAD-dependent cmnm(5)s(2)U34 oxidoreductase.

It in the N-terminal section; belongs to the methyltransferase superfamily. tRNA (mnm(5)s(2)U34)-methyltransferase family. The protein in the C-terminal section; belongs to the DAO family. FAD serves as cofactor.

The protein localises to the cytoplasm. The catalysed reaction is 5-aminomethyl-2-thiouridine(34) in tRNA + S-adenosyl-L-methionine = 5-methylaminomethyl-2-thiouridine(34) in tRNA + S-adenosyl-L-homocysteine + H(+). In terms of biological role, catalyzes the last two steps in the biosynthesis of 5-methylaminomethyl-2-thiouridine (mnm(5)s(2)U) at the wobble position (U34) in tRNA. Catalyzes the FAD-dependent demodification of cmnm(5)s(2)U34 to nm(5)s(2)U34, followed by the transfer of a methyl group from S-adenosyl-L-methionine to nm(5)s(2)U34, to form mnm(5)s(2)U34. This Shewanella baltica (strain OS185) protein is tRNA 5-methylaminomethyl-2-thiouridine biosynthesis bifunctional protein MnmC.